We begin with the raw amino-acid sequence, 117 residues long: MKLFVLLSILVWLAQPVLNRPLSIFYTKQILPRTYTPPMRELEYWCTYGKHCDFCWDCKNGICKNKVLDDMPLIVQNDYISKCSITRFIDRCMYFIEPKIPYIHYMNCSLPHIFSLI.

Positions 1–16 are cleaved as a signal peptide; sequence MKLFVLLSILVWLAQP.

The protein belongs to the asfivirus MGF 110 family.

The protein is Protein MGF 110-13L of Ornithodoros (relapsing fever ticks).